Consider the following 493-residue polypeptide: Glutamate--tRNA ligase (493 aa).

The short motif at 10–20 (PSPTGDPHVGT) is the 'HIGH' region element. Positions 251-255 (KLSKR) match the 'KMSKS' region motif. Lys254 is an ATP binding site.

It belongs to the class-I aminoacyl-tRNA synthetase family. Glutamate--tRNA ligase type 1 subfamily. As to quaternary structure, monomer.

The protein resides in the cytoplasm. It carries out the reaction tRNA(Glu) + L-glutamate + ATP = L-glutamyl-tRNA(Glu) + AMP + diphosphate. Functionally, catalyzes the attachment of glutamate to tRNA(Glu) in a two-step reaction: glutamate is first activated by ATP to form Glu-AMP and then transferred to the acceptor end of tRNA(Glu). The sequence is that of Glutamate--tRNA ligase from Pseudomonas putida (strain GB-1).